The sequence spans 691 residues: ERI1 exoribonuclease 2 (691 aa).

In terms of domain architecture, Exonuclease spans Leu37–Ala226. Mg(2+) contacts are provided by Asp41, Glu43, and Asp156. Glu43 acts as the Proton acceptor in catalysis. An AMP-binding site is contributed by Glu43. Residue His213 is the Proton acceptor of the active site. His213 is an AMP binding site. Asp218 is a Mg(2+) binding site. Cys597, Cys599, Cys622, and Cys634 together coordinate Zn(2+). The GRF-type zinc finger occupies Cys597 to Leu643.

The protein belongs to the ERI2 family. Mg(2+) serves as cofactor.

The protein is ERI1 exoribonuclease 2 (ERI2) of Homo sapiens (Human).